We begin with the raw amino-acid sequence, 342 residues long: Putative gluconeogenesis factor (342 aa).

A disordered region spans residues 318-342 (SEPPVAATQEIPIDGGRPRGDDAWR). Threonine 325 carries the post-translational modification Phosphothreonine. Residues 333–342 (GRPRGDDAWR) show a composition bias toward basic and acidic residues.

Belongs to the gluconeogenesis factor family. In terms of processing, phosphorylated by PknA and/or PknB.

It is found in the cytoplasm. In terms of biological role, required for morphogenesis under gluconeogenic growth conditions. The polypeptide is Putative gluconeogenesis factor (Mycobacterium tuberculosis (strain CDC 1551 / Oshkosh)).